We begin with the raw amino-acid sequence, 162 residues long: Large ribosomal subunit protein uL15 (162 aa).

Residues 1-44 form a disordered region; the sequence is MKLNELRDNPGATKNRIRVGRGIGSGKGKTAGRGVKGQKSREGV. A compositionally biased stretch (gly residues) spans 21–35; the sequence is RGIGSGKGKTAGRGV.

This sequence belongs to the universal ribosomal protein uL15 family. In terms of assembly, part of the 50S ribosomal subunit.

Binds to the 23S rRNA. The chain is Large ribosomal subunit protein uL15 from Rhodospirillum rubrum (strain ATCC 11170 / ATH 1.1.1 / DSM 467 / LMG 4362 / NCIMB 8255 / S1).